Here is a 141-residue protein sequence, read N- to C-terminus: Nucleoside diphosphate kinase (141 aa).

Positions 11, 59, 87, 93, 104, and 114 each coordinate ATP. The active-site Pros-phosphohistidine intermediate is His-117.

The protein belongs to the NDK family. In terms of assembly, homotetramer. The cofactor is Mg(2+).

The protein resides in the cytoplasm. The enzyme catalyses a 2'-deoxyribonucleoside 5'-diphosphate + ATP = a 2'-deoxyribonucleoside 5'-triphosphate + ADP. It catalyses the reaction a ribonucleoside 5'-diphosphate + ATP = a ribonucleoside 5'-triphosphate + ADP. Its function is as follows. Major role in the synthesis of nucleoside triphosphates other than ATP. The ATP gamma phosphate is transferred to the NDP beta phosphate via a ping-pong mechanism, using a phosphorylated active-site intermediate. The sequence is that of Nucleoside diphosphate kinase from Paraburkholderia xenovorans (strain LB400).